Here is a 141-residue protein sequence, read N- to C-terminus: MFKSIKQIKSSIGFITTNTTRRNFCSNKIGGFTIKNVEDESKIKINNEISEIEKLRKKLLYQSKERGMLENDLLLGSFATLNIHKLTESQLRDYNLLLQQPDPDIFNWILKKAEVPEEFETEVLKLVQHHCKNDPLGYTRK.

This sequence belongs to the SDHAF2 family. In terms of assembly, interacts with the flavoprotein subunit within the SDH catalytic dimer.

The protein localises to the mitochondrion matrix. Its function is as follows. Plays an essential role in the assembly of succinate dehydrogenase (SDH), an enzyme complex (also referred to as respiratory complex II) that is a component of both the tricarboxylic acid (TCA) cycle and the mitochondrial electron transport chain, and which couples the oxidation of succinate to fumarate with the reduction of ubiquinone (coenzyme Q) to ubiquinol. Required for flavinylation (covalent attachment of FAD) of the flavoprotein subunit of the SDH catalytic dimer. The polypeptide is Succinate dehydrogenase assembly factor 2, mitochondrial (Dictyostelium discoideum (Social amoeba)).